The following is a 346-amino-acid chain: Elongation factor Ts (346 aa).

The tract at residues 80-83 is involved in Mg(2+) ion dislocation from EF-Tu; it reads TDFV.

The protein belongs to the EF-Ts family.

The protein localises to the cytoplasm. Functionally, associates with the EF-Tu.GDP complex and induces the exchange of GDP to GTP. It remains bound to the aminoacyl-tRNA.EF-Tu.GTP complex up to the GTP hydrolysis stage on the ribosome. The chain is Elongation factor Ts from Streptococcus pneumoniae (strain 70585).